Consider the following 314-residue polypeptide: Methionyl-tRNA formyltransferase (314 aa).

113 to 116 (SLLP) is a (6S)-5,6,7,8-tetrahydrofolate binding site.

Belongs to the Fmt family.

The catalysed reaction is L-methionyl-tRNA(fMet) + (6R)-10-formyltetrahydrofolate = N-formyl-L-methionyl-tRNA(fMet) + (6S)-5,6,7,8-tetrahydrofolate + H(+). Its function is as follows. Attaches a formyl group to the free amino group of methionyl-tRNA(fMet). The formyl group appears to play a dual role in the initiator identity of N-formylmethionyl-tRNA by promoting its recognition by IF2 and preventing the misappropriation of this tRNA by the elongation apparatus. This chain is Methionyl-tRNA formyltransferase, found in Ectopseudomonas mendocina (strain ymp) (Pseudomonas mendocina).